A 132-amino-acid polypeptide reads, in one-letter code: MSRHKSKSIPGRNLRLAEQIQKDLAGIIQREIDMTRAGLITLSGVELSADYAHAKVYFTVLGAEPDTAAALLNEKAGWLHSQLYKLLHIHTVPTLRFVHDPQLERGIEMSMLIDRANRGPHSGVPDEPEDQS.

This sequence belongs to the RbfA family. As to quaternary structure, monomer. Binds 30S ribosomal subunits, but not 50S ribosomal subunits or 70S ribosomes.

The protein localises to the cytoplasm. Functionally, one of several proteins that assist in the late maturation steps of the functional core of the 30S ribosomal subunit. Associates with free 30S ribosomal subunits (but not with 30S subunits that are part of 70S ribosomes or polysomes). Required for efficient processing of 16S rRNA. May interact with the 5'-terminal helix region of 16S rRNA. The sequence is that of Ribosome-binding factor A from Bordetella avium (strain 197N).